An 876-amino-acid chain; its full sequence is Leucine--tRNA ligase (876 aa).

The short motif at 43–53 is the 'HIGH' region element; sequence PYPSGRIHIGH. Residues 632–636 carry the 'KMSKS' region motif; the sequence is KMSKS. Residue K635 coordinates ATP.

It belongs to the class-I aminoacyl-tRNA synthetase family.

It localises to the cytoplasm. It catalyses the reaction tRNA(Leu) + L-leucine + ATP = L-leucyl-tRNA(Leu) + AMP + diphosphate. The protein is Leucine--tRNA ligase of Allorhizobium ampelinum (strain ATCC BAA-846 / DSM 112012 / S4) (Agrobacterium vitis (strain S4)).